Consider the following 969-residue polypeptide: Protein translocase subunit SecA (969 aa).

ATP contacts are provided by residues Gln99, Gly117–Thr121, and Asp631.

The protein belongs to the SecA family. As to quaternary structure, monomer and homodimer. Part of the essential Sec protein translocation apparatus which comprises SecA, SecYEG and auxiliary proteins SecDF. Other proteins may also be involved.

It is found in the cell inner membrane. The protein resides in the cytoplasm. It carries out the reaction ATP + H2O + cellular proteinSide 1 = ADP + phosphate + cellular proteinSide 2.. In terms of biological role, part of the Sec protein translocase complex. Interacts with the SecYEG preprotein conducting channel. Has a central role in coupling the hydrolysis of ATP to the transfer of proteins into and across the cell membrane, serving as an ATP-driven molecular motor driving the stepwise translocation of polypeptide chains across the membrane. This is Protein translocase subunit SecA from Chlamydia trachomatis serovar L2 (strain ATCC VR-902B / DSM 19102 / 434/Bu).